Reading from the N-terminus, the 450-residue chain is Keratin, type I cytoskeletal 25 (450 aa).

Residues 1–24 (MSLRLPSGSRRAGPRPTTGSLRLS) form a disordered region. The segment at 1 to 78 (MSLRLPSGSR…MNEGGLLSGN (78 aa)) is head. The tract at residues 79-114 (EKVTMQNLNDRLASYLENVRALEEANADLEQKIKGW) is coil 1A. The 316-residue stretch at 79–394 (EKVTMQNLND…LLIGGDDGAC (316 aa)) folds into the IF rod domain. Residues 115 to 136 (YEKFGPGSCRGLDHDYSRYLPI) form a linker 1 region. Positions 137-228 (IEDLKNQIIA…KNHKEEMQVL (92 aa)) are coil 1B. Residues 229–251 (QCAAGGNVNVEMNAAPGVDLTVL) form a linker 12 region. The segment at 252–390 (LNNMRAEYEA…ETYCLLIGGD (139 aa)) is coil 2. The tail stretch occupies residues 391–450 (DGACKSGGYKSKDYAAGNMGNQMKDPIRAIVVKKVLEEVDQRSKVLTTRLHSLEEKSQSN). A Phosphoserine modification is found at serine 442.

Belongs to the intermediate filament family. In terms of assembly, heterodimer of a type I and a type II keratin. Heterodimer with type II keratin KRT5 leading to the formation of keratin intermediate filament (KIF) network. Interacts with KRT6A to form filaments. Expressed in skin and wool follicle. Expression localized to the inner root sheath of wool follicle.

It localises to the cytoplasm. Its function is as follows. Essential for the proper assembly of type I and type II keratin protein complexes and formation of keratin intermediate filaments in the inner root sheath (irs). Plays a role in the cytoskeleton organization. This is Keratin, type I cytoskeletal 25 from Ovis aries (Sheep).